The primary structure comprises 78 residues: MKQIFIGIIRFYQKFISPMTPPTCRFYPTCSHYGLEAFQKHGALKGFWLTCKRILKCHPFHPGGFDPVPDKKDDKVNS.

Belongs to the UPF0161 family.

Its subcellular location is the cell membrane. Its function is as follows. Could be involved in insertion of integral membrane proteins into the membrane. In Bacillus cereus (strain G9842), this protein is Putative membrane protein insertion efficiency factor.